The primary structure comprises 221 residues: MSSFLEFAKPKMLDIKRKINFASGEKTDESVQPQQQTEQSSAQQTTPSAKAVSNPFITPLTESTPGMSESWVELAPSRTSLCSSVDINMVIIDEKDKDSRLSPVSIAQSPHVEFESLEQVKYKLVREMLPPGKNTDWIWDWSSRPENTPPKTVRMVQYGSNLTTPPNSPEPELYQYLPCESDSLFNVRVVFGFLVTNIFSFVVGAAVGFAVCRKLIKHHRQ.

The tract at residues Gly-24 to Pro-55 is disordered. Residue Lys-26 forms a Glycyl lysine isopeptide (Lys-Gly) (interchain with G-Cter in ubiquitin) linkage. Positions Gln-32 to Ala-49 are enriched in low complexity. The chain crosses the membrane as a helical span at residues Val-189–Phe-209. The tract at residues Val-189–Phe-209 is required for initiation of apoptosis.

This sequence belongs to the NIP3 family. Homodimer; via transmembrane domain. Interacts with ced-3 and ced-9. Ubiquitinated and degraded by the proteasome. Under oxidative stress conditions, ubiquitinated at Lys-26 in a pink-1 dependent manner. Colocalizes with pdr-1 and may be ubiquitinated by it. As to expression, expressed in all somatic tissues including neurons, pharynx, intestine, body wall muscles and vulva muscles.

It localises to the mitochondrion outer membrane. In terms of biological role, initiates apoptosis in a BH3-independent mechanism possibly by recruiting ced-3 to mitochondria and other cytoplasmic membranes. Has a role in lifespan and tumor growth. Required for the induction of mitophagy under stress conditions. This is NIP3 homolog from Caenorhabditis elegans.